Consider the following 188-residue polypeptide: Elongation factor P (188 aa).

An N6-(3,6-diaminohexanoyl)-5-hydroxylysine modification is found at Lys-34.

The protein belongs to the elongation factor P family. In terms of processing, may be beta-lysylated on the epsilon-amino group of Lys-34 by the combined action of EpmA and EpmB, and then hydroxylated on the C5 position of the same residue by EpmC (if this protein is present). Lysylation is critical for the stimulatory effect of EF-P on peptide-bond formation. The lysylation moiety may extend toward the peptidyltransferase center and stabilize the terminal 3-CCA end of the tRNA. Hydroxylation of the C5 position on Lys-34 may allow additional potential stabilizing hydrogen-bond interactions with the P-tRNA.

It localises to the cytoplasm. Its pathway is protein biosynthesis; polypeptide chain elongation. In terms of biological role, involved in peptide bond synthesis. Alleviates ribosome stalling that occurs when 3 or more consecutive Pro residues or the sequence PPG is present in a protein, possibly by augmenting the peptidyl transferase activity of the ribosome. Modification of Lys-34 is required for alleviation. The sequence is that of Elongation factor P from Xanthomonas campestris pv. campestris (strain B100).